A 930-amino-acid polypeptide reads, in one-letter code: Translation initiation factor IF-2 (930 aa).

The span at 50-67 (FKPAAAPKVEAKPAAPKV) shows a compositional bias: low complexity. Disordered regions lie at residues 50 to 217 (FKPA…SSEE) and 260 to 346 (EVVP…HELP). Basic and acidic residues-rich tracts occupy residues 68-90 (SAEK…EAKP) and 110-125 (FKAE…AERR). Positions 129 to 141 (KGNNRDQQQNGNR) are enriched in low complexity. 2 stretches are compositionally biased toward basic and acidic residues: residues 157-167 (RDNRRFNDQAK) and 262-295 (VPEK…DGPR). A compositionally biased stretch (low complexity) spans 309-318 (NQKNSNWNNN). The span at 337–346 (VTERKFHELP) shows a compositional bias: basic and acidic residues. Residues 432–599 (ERPPVVTIMG…TVLLVAEIQE (168 aa)) form the tr-type G domain. Residues 441 to 448 (GHVDHGKT) are G1. 441–448 (GHVDHGKT) provides a ligand contact to GTP. Residues 466-470 (GITQH) are G2. The G3 stretch occupies residues 487–490 (DTPG). GTP-binding positions include 487-491 (DTPGH) and 541-544 (NKID). A G4 region spans residues 541–544 (NKID). The tract at residues 577 to 579 (SAK) is G5.

This sequence belongs to the TRAFAC class translation factor GTPase superfamily. Classic translation factor GTPase family. IF-2 subfamily.

The protein resides in the cytoplasm. In terms of biological role, one of the essential components for the initiation of protein synthesis. Protects formylmethionyl-tRNA from spontaneous hydrolysis and promotes its binding to the 30S ribosomal subunits. Also involved in the hydrolysis of GTP during the formation of the 70S ribosomal complex. This is Translation initiation factor IF-2 from Streptococcus pneumoniae (strain ATCC 700669 / Spain 23F-1).